The sequence spans 302 residues: Heme A synthase (302 aa).

Residues Met-1 to Lys-8 are Cytoplasmic-facing. A helical transmembrane segment spans residues Trp-9–Thr-29. Residues Lys-30–Ser-67 are Extracellular-facing. Cys-37 and Cys-44 are oxidised to a cystine. Residue Glu-60 is part of the active site. A heme o-binding site is contributed by His-63. Residues Gly-68–Ile-88 traverse the membrane as a helical segment. Topologically, residues Lys-89–Pro-93 are cytoplasmic. The chain crosses the membrane as a helical span at residues Leu-94–Met-114. Over Trp-115–Leu-122 the chain is Extracellular. A helical transmembrane segment spans residues Ala-123–Ile-143. Heme o is bound at residue His-125. Topologically, residues Tyr-144–Leu-161 are cytoplasmic. Residues Arg-162–Val-182 form a helical membrane-spanning segment. Residues Arg-183–Arg-215 lie on the Extracellular side of the membrane. A heme b-binding site is contributed by His-214. The helical transmembrane segment at Gly-216–Tyr-236 threads the bilayer. The Cytoplasmic segment spans residues Arg-237–Tyr-244. Residues Gly-245–Ile-265 form a helical membrane-spanning segment. Residues Thr-266–Phe-271 lie on the Extracellular side of the membrane. A helical membrane pass occupies residues Ile-272–Ile-292. His-276 serves as a coordination point for heme b. Residues Leu-293–Gly-302 are Cytoplasmic-facing.

The protein belongs to the COX15/CtaA family. Type 1 subfamily. In terms of assembly, interacts with CtaB. Heme b serves as cofactor.

Its subcellular location is the cell membrane. The enzyme catalyses Fe(II)-heme o + 2 A + H2O = Fe(II)-heme a + 2 AH2. It functions in the pathway porphyrin-containing compound metabolism; heme A biosynthesis; heme A from heme O: step 1/1. Catalyzes the conversion of heme O to heme A by two successive hydroxylations of the methyl group at C8. The first hydroxylation forms heme I, the second hydroxylation results in an unstable dihydroxymethyl group, which spontaneously dehydrates, resulting in the formyl group of heme A. This chain is Heme A synthase, found in Staphylococcus saprophyticus subsp. saprophyticus (strain ATCC 15305 / DSM 20229 / NCIMB 8711 / NCTC 7292 / S-41).